The following is a 216-amino-acid chain: Ribosomal RNA small subunit methyltransferase G (216 aa).

S-adenosyl-L-methionine-binding positions include Gly73, Leu78, 124 to 125 (AE), and Arg139.

This sequence belongs to the methyltransferase superfamily. RNA methyltransferase RsmG family.

The protein resides in the cytoplasm. Specifically methylates the N7 position of guanine in position 518 of 16S rRNA. This Pseudarthrobacter chlorophenolicus (strain ATCC 700700 / DSM 12829 / CIP 107037 / JCM 12360 / KCTC 9906 / NCIMB 13794 / A6) (Arthrobacter chlorophenolicus) protein is Ribosomal RNA small subunit methyltransferase G.